Reading from the N-terminus, the 230-residue chain is Large ribosomal subunit protein uL1c (230 aa).

Belongs to the universal ribosomal protein uL1 family. Part of the 50S ribosomal subunit.

It localises to the plastid. The protein resides in the chloroplast. Functionally, binds directly to 23S rRNA. Might be involved in E site tRNA release (Potential). This is Large ribosomal subunit protein uL1c (rpl1) from Trieres chinensis (Marine centric diatom).